The following is a 231-amino-acid chain: Protein crossbronx homolog (231 aa).

The UBC core domain occupies 14–168 (LQEYKILTEY…VEECVRLSQA (155 aa)).

This sequence belongs to the ubiquitin-conjugating enzyme family. FTS subfamily.

This chain is Protein crossbronx homolog, found in Culex quinquefasciatus (Southern house mosquito).